A 291-amino-acid polypeptide reads, in one-letter code: Lectin (291 aa).

The signal sequence occupies residues 1–28 (MGISKKSQLVPLLAFITMFLMVVSRVSS). Aspartate 118 serves as a coordination point for Ca(2+). Position 138 (arginine 138) interacts with a carbohydrate. Positions 147 to 162 (NIIKNSTNLDFNAAYN) are cleaved as a propeptide — removed in mature form. Mn(2+) contacts are provided by glutamate 170 and aspartate 172. Ca(2+) is bound by residues aspartate 172, tyrosine 174, asparagine 176, and aspartate 181. Tyrosine 174 provides a ligand contact to a carbohydrate. Residues aspartate 181 and histidine 186 each contribute to the Mn(2+) site. Lysine 208 contributes to the Ca(2+) binding site. Serine 228 contributes to the a carbohydrate binding site. A propeptide spans 281–291 (QLQDLRIASVV) (removed in mature form).

It belongs to the leguminous lectin family. In terms of processing, the mature chain consists of residues 163-280 followed by residues 29-147. Concanavalin A-like lectins of the Diocleinae subtribe undergo proteolytic processing referred to as circular permutation. The propeptide is split into an N-terminal and a C-terminal part, the gamma and beta chain, respectively. These are then religated in beta-gamma order to form the mature alpha chain. The beta and gamma chains can often be detected in cell extracts.

In terms of biological role, D-mannose-binding lectin that also binds alpha-methyl-D-mannoside with even higher affinity. Has hemagglutinating activity against rabbit erythrocytes. Shows toxicity against the brine shrimp A.nauplii. Induces reversible paw edema and hypernociceptivity in rats. The polypeptide is Lectin (Dioclea lasiophylla).